The chain runs to 739 residues: Interleukin-17 receptor D (739 aa).

The signal sequence occupies residues Met-1 to Ala-16. Residues Cys-17 to Arg-299 are Extracellular-facing. N-linked (GlcNAc...) asparagine glycosylation is found at Asn-19, Asn-55, Asn-62, Asn-80, Asn-137, Asn-171, Asn-206, and Asn-277. A helical membrane pass occupies residues Ala-300–Met-320. Residues Cys-321–Leu-739 lie on the Cytoplasmic side of the membrane. Residues Arg-355 to Ser-509 form the SEFIR domain. 2 disordered regions span residues Gly-614–Pro-635 and Val-650–Ser-719. Positions Ser-667–Leu-702 are enriched in low complexity.

As to quaternary structure, interacts with MAP3K7. Self-associates. Interacts with FGFR1, FGFR2 and phosphorylated MAP2K1 or MAP2K2. Associates with a MAP2K1/2-MAPK1/3 complex. Expressed in umbilical vein endothelial cells and in several highly vascularized tissues such as kidney, colon, skeletal muscle, heart and small intestine. Highly expressed in ductal epithelial cells of salivary glands, seminal vesicles and the collecting tubules of the kidney. Isoform 1 is also highly expressed in both fetal and adult brain, pituitary, tonsils, spleen, adenoids, fetal kidney, liver, testes and ovary. Isoform 1 is also expressed at moderate levels in primary aortic endothelial cells and adrenal medulla, and at low levels in adrenal cortex. Isoform 4 is specifically and highly expressed in pituitary, fetal brain and umbilical vein endothelial cells.

It localises to the golgi apparatus membrane. It is found in the cell membrane. Its subcellular location is the cytoplasm. Feedback inhibitor of fibroblast growth factor mediated Ras-MAPK signaling and ERK activation. Regulates the nuclear ERK signaling pathway by spatially blocking nuclear translocation of activated ERK without inhibiting cytoplasmic phosphorylation of ERK. Mediates JNK activation and may be involved in apoptosis. May inhibit FGF-induced FGFR1 tyrosine phosphorylation. Might have a role in the early stages of fate specification of GnRH-secreting neurons. Inhibits TGFB-induced epithelial-to-mesenchymal transition in lens epithelial cells. The chain is Interleukin-17 receptor D (IL17RD) from Homo sapiens (Human).